Reading from the N-terminus, the 283-residue chain is MPELPEVETVRRGLAPAMEGAVIARAEVNRPDLRWPFPDRMAERLTGQRVERLRRRSKYILADLSGGETLLIHLGMSGRMTVSGDPLGQFVHDHPAAQKHDHVVFHMDNGARITFNDPRRFGAMDLMATATADEHKLLMVLGPEPLGNDFHEDYLVAALKGRNTPVKSALLDQGIVAGLGNIYVCEALFRAGVSPRRKAGQIAAARVSALVPIIRQVLSEAIEAGGSSLKDFRQADGELGYFQHSFDVYGREGEPCRRAGCDGTVQRITQSGRSSFYCAQCQR.

The active-site Schiff-base intermediate with DNA is Pro-2. Glu-3 serves as the catalytic Proton donor. Residue Lys-58 is the Proton donor; for beta-elimination activity of the active site. Residues His-100, Arg-119, and Arg-162 each contribute to the DNA site. The FPG-type zinc finger occupies 247 to 283 (DVYGREGEPCRRAGCDGTVQRITQSGRSSFYCAQCQR). Arg-273 functions as the Proton donor; for delta-elimination activity in the catalytic mechanism.

The protein belongs to the FPG family. In terms of assembly, monomer. Zn(2+) is required as a cofactor.

The enzyme catalyses Hydrolysis of DNA containing ring-opened 7-methylguanine residues, releasing 2,6-diamino-4-hydroxy-5-(N-methyl)formamidopyrimidine.. It catalyses the reaction 2'-deoxyribonucleotide-(2'-deoxyribose 5'-phosphate)-2'-deoxyribonucleotide-DNA = a 3'-end 2'-deoxyribonucleotide-(2,3-dehydro-2,3-deoxyribose 5'-phosphate)-DNA + a 5'-end 5'-phospho-2'-deoxyribonucleoside-DNA + H(+). Its function is as follows. Involved in base excision repair of DNA damaged by oxidation or by mutagenic agents. Acts as a DNA glycosylase that recognizes and removes damaged bases. Has a preference for oxidized purines, such as 7,8-dihydro-8-oxoguanine (8-oxoG). Has AP (apurinic/apyrimidinic) lyase activity and introduces nicks in the DNA strand. Cleaves the DNA backbone by beta-delta elimination to generate a single-strand break at the site of the removed base with both 3'- and 5'-phosphates. In Ruegeria pomeroyi (strain ATCC 700808 / DSM 15171 / DSS-3) (Silicibacter pomeroyi), this protein is Formamidopyrimidine-DNA glycosylase.